The following is a 192-amino-acid chain: 7-methyl-GTP pyrophosphatase (192 aa).

Residue aspartate 70 is the Proton acceptor of the active site.

It belongs to the Maf family. YceF subfamily. Requires a divalent metal cation as cofactor.

The protein localises to the cytoplasm. The catalysed reaction is N(7)-methyl-GTP + H2O = N(7)-methyl-GMP + diphosphate + H(+). Nucleoside triphosphate pyrophosphatase that hydrolyzes 7-methyl-GTP (m(7)GTP). May have a dual role in cell division arrest and in preventing the incorporation of modified nucleotides into cellular nucleic acids. This chain is 7-methyl-GTP pyrophosphatase, found in Xanthomonas campestris pv. campestris (strain 8004).